The sequence spans 166 residues: Peptidyl-prolyl cis-trans isomerase cyp18 (166 aa).

The 163-residue stretch at 2–164 (STVELNTSAG…QPVVIESAKI (163 aa)) folds into the PPIase cyclophilin-type domain.

The protein belongs to the cyclophilin-type PPIase family. Monomer.

The protein localises to the cytoplasm. The catalysed reaction is [protein]-peptidylproline (omega=180) = [protein]-peptidylproline (omega=0). Inhibition by cyclosporin A with a Ki of 21 mu-mol. Its function is as follows. PPIases accelerate the folding of proteins. It catalyzes the cis-trans isomerization of proline imidic peptide bonds in oligopeptides. The polypeptide is Peptidyl-prolyl cis-trans isomerase cyp18 (Streptomyces antibioticus).